The chain runs to 498 residues: MLMLHAVPVGICLLLWYVVYGTKRKECIPTIRRWPRLLPQFLDRLSYNDHAARLVKHGYEKHKNQPFRLLKMDMDLIVIPLQYALELRAVTSDKLDPLTASFDDNAGKVTRILLGSELHTRAIQQRLTPKLPQTLPVLLDELNHAFGQVLPAGNDGSNAWISVNPYELVLNLATRATARLFVGDLICRNEIFLETTASFSRNTFDTISTSRSFGNLFTHYFARWISTAKEAHGQLQYIQNLLGSEVQRRKLNSEEKHDDFLQWCTELAVTEDEARPEALAHRTLGILSMAVIHTTAMALTHILFDMISDDSLKESLRREQQNVLKHGWTEITQQTMLDMKQLDSLMRESQRINPVGEFTFRRIVRERITLSDGYQLQPGQQIAIPAKCINTDSTKLSDAHLFQPFRWLKQSGTATTSFSNSSALNLHFGFGRYACPGRFIASYMIKAIMSRILLEYDFKLDSEFPSRRPPNIVHGDKILPNRNAVVLLRRLEKTVTVC.

Residues 1–21 (MLMLHAVPVGICLLLWYVVYG) form the signal peptide. A glycan (N-linked (GlcNAc...) asparagine) is linked at asparagine 420. Residue cysteine 435 coordinates heme.

This sequence belongs to the cytochrome P450 family. Requires heme as cofactor.

Its pathway is secondary metabolite biosynthesis. Its function is as follows. Cytochrome P450 monooxygenase; part of the gene clusters that mediates the biosynthesis of lolitrems, indole-diterpene mycotoxins that are potent tremorgens in mammals, and are synthesized by clavicipitaceous fungal endophytes in association with their grass hosts. The geranylgeranyl diphosphate (GGPP) synthase ltmG is proposed to catalyze the first step in lolitrem biosynthesis. LtmG catalyzes a series of iterative condensations of isopentenyl diphosphate (IPP) with dimethylallyl diphosphate (DMAPP), geranyl diphosphate (GPP), and farnesyl diphosphate (FPP), to form GGPP. GGPP then condenses with indole-3-glycerol phosphate to form 3-geranylgeranylindole, an acyclic intermediate, to be incorporated into paxilline. Either ltmG or ltmC could be responsible for this step, as both are putative prenyl transferases. The FAD-dependent monooxygenase ltmM then catalyzes the epoxidation of the two terminal alkenes of the geranylgeranyl moiety, which is subsequently cyclized by ltmB, to paspaline. The cytochrome P450 monooxygenases ltmQ and ltmP can sequentially oxidize paspaline to terpendole E and terpendole F. Alternatively, ltmP converts paspaline to an intermediate which is oxidized by ltmQ to terpendole F. LtmF, ltmK, ltmE and ltmJ appear to be unique to the epichloe endophytes. The prenyltransferase ltmF is involved in the 27-hydroxyl-O-prenylation. The cytochrome P450 monooxygenase ltmK is required for the oxidative acetal ring formation. The multi-functional prenyltransferase ltmE is required for C20- and C21-prenylations of the indole ring of paspalanes and acts together with the cytochrome P450 monooxygenase ltmJ to yield lolitremanes by multiple oxidations and ring closures. The stereoisomer pairs of lolitriol and lolitrem N or lolitrem B and lolitrem F may be attributed to variations in the way in which ring closure can occur under the action of ltmJ. While the major product of this pathway is lolitrem B, the prenyl transferases and cytochrome P450 monooxygenases identified in this pathway have a remarkable versatility in their regio- and stereo-specificities to generate a diverse range of metabolites that are products of a metabolic grid rather than a linear pathway. The sequence is that of Cytochrome P450 monooxygenase ltmP from Epichloe festucae var. lolii (Neotyphodium lolii).